The chain runs to 331 residues: tRNA N6-adenosine threonylcarbamoyltransferase (331 aa).

A divalent metal cation is bound by residues His-108, His-112, and Tyr-129. Residues 129-133 (YASGG), Asp-161, Gly-176, Glu-180, and Asn-261 each bind substrate. Asp-289 serves as a coordination point for a divalent metal cation.

This sequence belongs to the KAE1 / TsaD family. Component of the EKC/KEOPS complex composed of at least BUD32, CGI121, GON7, KAE1 and PCC1; the whole complex dimerizes. A divalent metal cation serves as cofactor.

The protein resides in the cytoplasm. Its subcellular location is the nucleus. The enzyme catalyses L-threonylcarbamoyladenylate + adenosine(37) in tRNA = N(6)-L-threonylcarbamoyladenosine(37) in tRNA + AMP + H(+). Its function is as follows. Component of the EKC/KEOPS complex that is required for the formation of a threonylcarbamoyl group on adenosine at position 37 (t(6)A37) in tRNAs that read codons beginning with adenine. The complex is probably involved in the transfer of the threonylcarbamoyl moiety of threonylcarbamoyl-AMP (TC-AMP) to the N6 group of A37. KAE1 likely plays a direct catalytic role in this reaction, but requires other protein(s) of the complex to fulfill this activity. The EKC/KEOPS complex also promotes both telomere uncapping and telomere elongation. The complex is required for efficient recruitment of transcriptional coactivators. This is tRNA N6-adenosine threonylcarbamoyltransferase from Encephalitozoon cuniculi (strain GB-M1) (Microsporidian parasite).